Reading from the N-terminus, the 245-residue chain is 1-(5-phosphoribosyl)-5-[(5-phosphoribosylamino)methylideneamino] imidazole-4-carboxamide isomerase (245 aa).

The active-site Proton acceptor is the D7. D129 acts as the Proton donor in catalysis.

This sequence belongs to the HisA/HisF family.

The protein localises to the cytoplasm. The enzyme catalyses 1-(5-phospho-beta-D-ribosyl)-5-[(5-phospho-beta-D-ribosylamino)methylideneamino]imidazole-4-carboxamide = 5-[(5-phospho-1-deoxy-D-ribulos-1-ylimino)methylamino]-1-(5-phospho-beta-D-ribosyl)imidazole-4-carboxamide. It functions in the pathway amino-acid biosynthesis; L-histidine biosynthesis; L-histidine from 5-phospho-alpha-D-ribose 1-diphosphate: step 4/9. This chain is 1-(5-phosphoribosyl)-5-[(5-phosphoribosylamino)methylideneamino] imidazole-4-carboxamide isomerase, found in Shewanella frigidimarina (strain NCIMB 400).